A 247-amino-acid polypeptide reads, in one-letter code: DNA polymerase sliding clamp (247 aa).

The protein belongs to the PCNA family. As to quaternary structure, homotrimer. The subunits circularize to form a toroid; DNA passes through its center. Replication factor C (RFC) is required to load the toroid on the DNA.

In terms of biological role, sliding clamp subunit that acts as a moving platform for DNA processing. Responsible for tethering the catalytic subunit of DNA polymerase and other proteins to DNA during high-speed replication. The polypeptide is DNA polymerase sliding clamp (Haloarcula marismortui (strain ATCC 43049 / DSM 3752 / JCM 8966 / VKM B-1809) (Halobacterium marismortui)).